The chain runs to 305 residues: Protein hrde-2 (305 aa).

2 disordered regions span residues 211–233 and 267–305; these read AEMV…PVPA and EMSN…EYCQ. Residues 215-227 show a composition bias toward polar residues; it reads PSNTTGSSGSPMS. Positions 268 to 287 are enriched in acidic residues; sequence MSNDEYSPDESENDENEYDY. Basic and acidic residues predominate over residues 289–305; it reads NAARYDDGYDEGHEYCQ.

Expressed throughout the male and female germline.

Its subcellular location is the nucleus. Its function is as follows. Plays a role in germline RNA interference (RNAi), and in particular is required for piwi-interacting RNA (piRNA) gene silencing. Facilitates the binding of the argonaut protein hrde-1 to small interfering RNAs (siRNAs) targets that are required for transgenerational epigenetic inheritance and germline immortality. The sequence is that of Protein hrde-2 from Caenorhabditis elegans.